A 39-amino-acid chain; its full sequence is Photosystem II reaction center protein J (39 aa).

Residues 7–27 (IPLWLIATVGGTAALTVVGLF) traverse the membrane as a helical segment.

This sequence belongs to the PsbJ family. In terms of assembly, PSII is composed of 1 copy each of membrane proteins PsbA, PsbB, PsbC, PsbD, PsbE, PsbF, PsbH, PsbI, PsbJ, PsbK, PsbL, PsbM, PsbT, PsbX, PsbY, PsbZ, Psb30/Ycf12, at least 3 peripheral proteins of the oxygen-evolving complex and a large number of cofactors. It forms dimeric complexes.

The protein resides in the plastid. It is found in the chloroplast thylakoid membrane. Functionally, one of the components of the core complex of photosystem II (PSII). PSII is a light-driven water:plastoquinone oxidoreductase that uses light energy to abstract electrons from H(2)O, generating O(2) and a proton gradient subsequently used for ATP formation. It consists of a core antenna complex that captures photons, and an electron transfer chain that converts photonic excitation into a charge separation. The sequence is that of Photosystem II reaction center protein J from Rhodomonas salina (Cryptomonas salina).